Here is a 294-residue protein sequence, read N- to C-terminus: Homoserine kinase (294 aa).

83 to 93 contacts ATP; the sequence is RPKSGLGSSGA.

This sequence belongs to the GHMP kinase family. Homoserine kinase subfamily.

The protein localises to the cytoplasm. The catalysed reaction is L-homoserine + ATP = O-phospho-L-homoserine + ADP + H(+). Its pathway is amino-acid biosynthesis; L-threonine biosynthesis; L-threonine from L-aspartate: step 4/5. Its function is as follows. Catalyzes the ATP-dependent phosphorylation of L-homoserine to L-homoserine phosphate. In Pyrococcus abyssi (strain GE5 / Orsay), this protein is Homoserine kinase.